The primary structure comprises 84 residues: Large ribosomal subunit protein uL29 (84 aa).

The protein belongs to the universal ribosomal protein uL29 family.

The chain is Large ribosomal subunit protein uL29 from Mycoplasma mobile (strain ATCC 43663 / 163K / NCTC 11711) (Mesomycoplasma mobile).